We begin with the raw amino-acid sequence, 548 residues long: MTSVTDRSAHSAERSTEHTIDIHTTAGKLAELHKRREESLHPVGEDAVEKVHAKGKLTARERIYALLDEDSFVELDALAKHRSTNFNLGEKRPLGDGVVTGYGTIDGRDVCIFSQDATVFGGSLGEVYGEKIVKVQELAIKTGRPLIGINDGAGARIQEGVVSLGLYSRIFRNNILASGVIPQISLIMGAAAGGHVYSPALTDFVIMVDQTSQMFITGPDVIKTVTGEEVTMEELGGAHTHMAKSGTAHYAASGEQDAFDYVRELLSYLPPNNSTDAPRYQAAAPTGPIEENLTDEDLELDTLIPDSPNQPYDMHEVITRLLDDEFLEIQAGYAQNIVVGFGRIGGRPVGIVANQPTHFAGCLDINASEKAARFVRTCDCFNIPIVMLVDVPGFLPGTDQEYNGIIRRGAKLLYAYGEATVPKITVITRKAYGGAYCVMGSKDMGCDVNLAWPTAQIAVMGASGAVGFVYRQQLAEAAANGEDIDKLRLRLQQEYEDTLVNPYVAAERGYVDAVIPPSHTRGYIGTALRLLERKIAQLPPKKHGNVPL.

The segment at 1-23 (MTSVTDRSAHSAERSTEHTIDIH) is disordered. Residues 7–21 (RSAHSAERSTEHTID) are compositionally biased toward basic and acidic residues. The 257-residue stretch at 25–281 (TAGKLAELHK…NNSTDAPRYQ (257 aa)) folds into the CoA carboxyltransferase N-terminal domain. The CoA carboxyltransferase C-terminal domain occupies 295–541 (DEDLELDTLI…ERKIAQLPPK (247 aa)).

It belongs to the AccD/PCCB family. In terms of assembly, the biotin-dependent acyl-CoA carboxylase complex is composed of AccA3, which contains the biotin carboxylase (BC) and biotin carboxyl carrier protein (BCCP) domains, and AccD5, which contains the carboxyl transferase (CT) domain.

The catalysed reaction is N(6)-carboxybiotinyl-L-lysyl-[protein] + acetyl-CoA = N(6)-biotinyl-L-lysyl-[protein] + malonyl-CoA. It carries out the reaction N(6)-carboxybiotinyl-L-lysyl-[protein] + propanoyl-CoA = methylmalonyl-CoA + N(6)-biotinyl-L-lysyl-[protein]. Its pathway is lipid metabolism; mycolic acid biosynthesis. In terms of biological role, component of a biotin-dependent acyl-CoA carboxylase complex. This subunit transfers the CO2 from carboxybiotin to the CoA ester substrate. When associated with the alpha3 subunit AccA3, is involved in the carboxylation of acetyl-CoA and propionyl-CoA. This Mycobacterium tuberculosis (strain CDC 1551 / Oshkosh) protein is Biotin-dependent acetyl-/propionyl-coenzyme A carboxylase beta5 subunit (accD5).